A 642-amino-acid polypeptide reads, in one-letter code: MYPASPPAGPALHPVPHRARLPQPRCLAEPPRSPAPGPGSTARPPPPPAPGPRPRVAVKMTFRKAYSIKDKLQAIERVKGGERQASVCRDFGVPGGTLRGWLKDEPKLRWFLDQLGGEVGTQRKKMRLANEEEIDRAVYSWFLTLRQHGVPLSGPVIQAQAEAFARQIYGPECTFKASHGWFWRWQKRHGISSQRIYGEAESPVAGPAPVKEEPAQSPGAVLVPDGAPATLPHSEGGYGDEQIYNANVTGLYWRLLPEQASTPGTGDSKEPGGCSRRWRSDRVTVLLAANLTGSHKLKPLVIGQLPDPPSLRHHNQDKFPASYRYSPDAWLSRPLLRGWFFEEFVPGVKRYLRRSCLQQKAVLLVAHPPCPSWATSMPPLEESEETPRQCQPELLGSPEELQTPDGAVRVLFLSKGTSRAHIPAPLEHGVVAAFKHLYKRELLRLAVSCASGSPLDFMRSFVLKDMLYLAGLSWDLVQAGSIERCWLLGLRAAFEPGQQPAHQVEETAEHSRVLSDLTHLAALAYKRLAPEEVAQWLHLDDDGGLPEGCREEVAPAAPPSPASLPSSIGAGEEEEEATEQGGVLVPTAGEAVWGLETALRWLESQDPREVGPLRLVQLRSLITMARRLGGIGPSAVTSDDGV.

Residues 1–54 (MYPASPPAGPALHPVPHRARLPQPRCLAEPPRSPAPGPGSTARPPPPPAPGPRP) form a disordered region. Over residues 31–53 (PRSPAPGPGSTARPPPPPAPGPR) the composition is skewed to pro residues. In terms of domain architecture, HTH psq-type spans 57–108 (AVKMTFRKAYSIKDKLQAIERVKGGERQASVCRDFGVPGGTLRGWLKDEPKL). 2 consecutive DNA-binding regions (H-T-H motif) follow at residues 84-104 (QASVCRDFGVPGGTLRGWLKD) and 155-188 (PVIQAQAEAFARQIYGPECTFKASHGWFWRWQKR). Positions 122–195 (QRKKMRLANE…QKRHGISSQR (74 aa)) constitute an HTH CENPB-type domain. Residues 202-238 (SPVAGPAPVKEEPAQSPGAVLVPDGAPATLPHSEGGY) form a disordered region. In terms of domain architecture, DDE-1 spans 240 to 365 (DEQIYNANVT…CLQQKAVLLV (126 aa)). 2 disordered regions span residues 375-400 (TSMPPLEESEETPRQCQPELLGSPEE) and 548-581 (GCREEVAPAAPPSPASLPSSIGAGEEEEEATEQG).

This sequence belongs to the tigger transposable element derived protein family.

Its subcellular location is the nucleus. The protein is Tigger transposable element derived 5 (Tigd5) of Mus musculus (Mouse).